Here is a 1317-residue protein sequence, read N- to C-terminus: DNA-directed RNA polymerase subunit beta' (1317 aa).

Zn(2+)-binding residues include C214, C286, C293, and C296. Residues 1279–1317 are disordered; the sequence is RAYAGTQLSQDDEEFEETYDTDEDDFDMDDDDDFGDDED. Residues 1288–1317 are compositionally biased toward acidic residues; it reads QDDEEFEETYDTDEDDFDMDDDDDFGDDED.

The protein belongs to the RNA polymerase beta' chain family. RpoC2 subfamily. As to quaternary structure, in cyanobacteria the RNAP catalytic core is composed of 2 alpha, 1 beta, 1 beta', 1 gamma and 1 omega subunit. When a sigma factor is associated with the core the holoenzyme is formed, which can initiate transcription. Zn(2+) serves as cofactor.

The catalysed reaction is RNA(n) + a ribonucleoside 5'-triphosphate = RNA(n+1) + diphosphate. In terms of biological role, DNA-dependent RNA polymerase catalyzes the transcription of DNA into RNA using the four ribonucleoside triphosphates as substrates. The sequence is that of DNA-directed RNA polymerase subunit beta' from Synechocystis sp. (strain ATCC 27184 / PCC 6803 / Kazusa).